A 448-amino-acid polypeptide reads, in one-letter code: Phosphoglucosamine mutase (448 aa).

S101 functions as the Phosphoserine intermediate in the catalytic mechanism. Residues S101, D241, D243, and D245 each contribute to the Mg(2+) site. Residue S101 is modified to Phosphoserine.

It belongs to the phosphohexose mutase family. It depends on Mg(2+) as a cofactor. Post-translationally, activated by phosphorylation.

It carries out the reaction alpha-D-glucosamine 1-phosphate = D-glucosamine 6-phosphate. Its function is as follows. Catalyzes the conversion of glucosamine-6-phosphate to glucosamine-1-phosphate. This Macrococcus caseolyticus (strain JCSC5402) (Macrococcoides caseolyticum) protein is Phosphoglucosamine mutase.